The sequence spans 322 residues: 1-aminocyclopropane-1-carboxylate oxidase 1 (322 aa).

The Fe2OG dioxygenase domain occupies 159–259; sequence PTFGTKVSSY…RMSIASFYNP (101 aa). Fe cation-binding residues include His183, Asp185, and His240.

This sequence belongs to the iron/ascorbate-dependent oxidoreductase family. It depends on Fe cation as a cofactor.

It carries out the reaction 1-aminocyclopropane-1-carboxylate + L-ascorbate + O2 = ethene + L-dehydroascorbate + hydrogen cyanide + CO2 + 2 H2O. It functions in the pathway alkene biosynthesis; ethylene biosynthesis via S-adenosyl-L-methionine; ethylene from S-adenosyl-L-methionine: step 2/2. In Oryza sativa subsp. japonica (Rice), this protein is 1-aminocyclopropane-1-carboxylate oxidase 1 (ACO1).